A 288-amino-acid chain; its full sequence is Nucleotide-binding protein ASA_0318 (288 aa).

ATP is bound at residue 8–15 (GRSGSGKT). Residue 56-59 (DVRN) participates in GTP binding.

The protein belongs to the RapZ-like family.

In terms of biological role, displays ATPase and GTPase activities. The chain is Nucleotide-binding protein ASA_0318 from Aeromonas salmonicida (strain A449).